Here is a 94-residue protein sequence, read N- to C-terminus: YcgL domain-containing protein VP0875 (94 aa).

Residues 1 to 84 (MLCSIYKSSK…PPENLLEKYK (84 aa)) enclose the YcgL domain.

This Vibrio parahaemolyticus serotype O3:K6 (strain RIMD 2210633) protein is YcgL domain-containing protein VP0875.